A 387-amino-acid chain; its full sequence is 1-deoxy-D-xylulose 5-phosphate reductoisomerase (387 aa).

Residues T10, G11, S12, V13, N38, and N119 each contribute to the NADPH site. K120 serves as a coordination point for 1-deoxy-D-xylulose 5-phosphate. E121 is a binding site for NADPH. D145 lines the Mn(2+) pocket. 1-deoxy-D-xylulose 5-phosphate contacts are provided by S146, E147, S170, and H193. E147 is a binding site for Mn(2+). Residue G199 coordinates NADPH. 1-deoxy-D-xylulose 5-phosphate-binding residues include S206, N211, K212, and E215. E215 lines the Mn(2+) pocket.

The protein belongs to the DXR family. Requires Mg(2+) as cofactor. Mn(2+) serves as cofactor.

The catalysed reaction is 2-C-methyl-D-erythritol 4-phosphate + NADP(+) = 1-deoxy-D-xylulose 5-phosphate + NADPH + H(+). It functions in the pathway isoprenoid biosynthesis; isopentenyl diphosphate biosynthesis via DXP pathway; isopentenyl diphosphate from 1-deoxy-D-xylulose 5-phosphate: step 1/6. In terms of biological role, catalyzes the NADPH-dependent rearrangement and reduction of 1-deoxy-D-xylulose-5-phosphate (DXP) to 2-C-methyl-D-erythritol 4-phosphate (MEP). The sequence is that of 1-deoxy-D-xylulose 5-phosphate reductoisomerase from Wolbachia sp. subsp. Drosophila simulans (strain wRi).